A 470-amino-acid polypeptide reads, in one-letter code: Low molecular weight neuronal intermediate filament (470 aa).

The head stretch occupies residues 1 to 91; that stretch reads MTSRELYTSS…KIVRTNEKEQ (91 aa). The IF rod domain occupies 88 to 399; it reads EKEQLQGLND…KLLEGEETRL (312 aa). The interval 91 to 123 is coil 1A; that stretch reads QLQGLNDRFVTYIEKVHHLEQQNKLLESEVTLL. A linker 1 region spans residues 121–136; it reads TLLRQKHSEPSRLSHI. The coil 1B stretch occupies residues 137–232; the sequence is YEQEIRELRS…KVHEEEIAEL (96 aa). Residues 233-251 are linker 12; the sequence is QASVQEAQISVEMDVVSKP. Residues 252–270 form a coil 2A region; that stretch reads DLTAALKEIRMQYEVLSAR. Residues 271 to 279 are linker 2; it reads NQQSSEEWY. A coil 2B region spans residues 280–395; it reads QAKIANVSLE…AAYRKLLEGE (116 aa). The segment at 396 to 470 is tail; the sequence is ETRLTSVGGG…EKISQKAAAN (75 aa). A compositionally biased stretch (low complexity) spans 414 to 431; the sequence is FSSGSYSGGRSSTTSTIS. Residues 414–470 are disordered; it reads FSSGSYSGGRSSTTSTISIRKEEKKESPEGGKGGSSGQPKTSKPGDQEKISQKAAAN. Residues 432–442 show a composition bias toward basic and acidic residues; the sequence is IRKEEKKESPE.

This sequence belongs to the intermediate filament family. Nervous system; in axons in the PNS and in small perikarya in the dorsal root ganglion.

In Xenopus laevis (African clawed frog), this protein is Low molecular weight neuronal intermediate filament.